The primary structure comprises 376 residues: Queuine tRNA-ribosyltransferase (376 aa).

The Proton acceptor role is filled by Asp-93. Residues 93 to 97 (DSGGF), Asp-147, Gln-190, and Gly-217 contribute to the substrate site. Residues 248 to 254 (GVGKPDD) are RNA binding. The active-site Nucleophile is the Asp-267. Residues Cys-305, Cys-307, Cys-310, and His-336 each coordinate Zn(2+).

Belongs to the queuine tRNA-ribosyltransferase family. As to quaternary structure, homodimer. Within each dimer, one monomer is responsible for RNA recognition and catalysis, while the other monomer binds to the replacement base PreQ1. Zn(2+) serves as cofactor.

It catalyses the reaction 7-aminomethyl-7-carbaguanine + guanosine(34) in tRNA = 7-aminomethyl-7-carbaguanosine(34) in tRNA + guanine. It functions in the pathway tRNA modification; tRNA-queuosine biosynthesis. In terms of biological role, catalyzes the base-exchange of a guanine (G) residue with the queuine precursor 7-aminomethyl-7-deazaguanine (PreQ1) at position 34 (anticodon wobble position) in tRNAs with GU(N) anticodons (tRNA-Asp, -Asn, -His and -Tyr). Catalysis occurs through a double-displacement mechanism. The nucleophile active site attacks the C1' of nucleotide 34 to detach the guanine base from the RNA, forming a covalent enzyme-RNA intermediate. The proton acceptor active site deprotonates the incoming PreQ1, allowing a nucleophilic attack on the C1' of the ribose to form the product. After dissociation, two additional enzymatic reactions on the tRNA convert PreQ1 to queuine (Q), resulting in the hypermodified nucleoside queuosine (7-(((4,5-cis-dihydroxy-2-cyclopenten-1-yl)amino)methyl)-7-deazaguanosine). The protein is Queuine tRNA-ribosyltransferase of Jannaschia sp. (strain CCS1).